The following is a 513-amino-acid chain: ATP synthase subunit alpha (513 aa).

169–176 (GDRQTGKT) contributes to the ATP binding site.

Belongs to the ATPase alpha/beta chains family. F-type ATPases have 2 components, CF(1) - the catalytic core - and CF(0) - the membrane proton channel. CF(1) has five subunits: alpha(3), beta(3), gamma(1), delta(1), epsilon(1). CF(0) has three main subunits: a(1), b(2) and c(9-12). The alpha and beta chains form an alternating ring which encloses part of the gamma chain. CF(1) is attached to CF(0) by a central stalk formed by the gamma and epsilon chains, while a peripheral stalk is formed by the delta and b chains.

Its subcellular location is the cell inner membrane. The enzyme catalyses ATP + H2O + 4 H(+)(in) = ADP + phosphate + 5 H(+)(out). Produces ATP from ADP in the presence of a proton gradient across the membrane. The alpha chain is a regulatory subunit. This Enterobacter sp. (strain 638) protein is ATP synthase subunit alpha.